We begin with the raw amino-acid sequence, 94 residues long: Adaptation to cold protein J (94 aa).

The region spanning 3–93 (NHFSVLGIKP…AMRELWDQFY (91 aa)) is the J domain. The interval 74–94 (NNVIVTDPNSAMRELWDQFYP) is essential for interaction with AtcC.

In terms of assembly, interacts via its C-terminal extension with AtcC. Does not interact with AtcA and AtcB.

Involved in cold adaptation. The J-domain is functional and can stimulate the ATPase activity of the DnaK chaperone. May work as a co-chaperone of the DnaK system to support cold resistance. This Shewanella oneidensis (strain ATCC 700550 / JCM 31522 / CIP 106686 / LMG 19005 / NCIMB 14063 / MR-1) protein is Adaptation to cold protein J.